The primary structure comprises 259 residues: Ribonuclease PH (259 aa).

Residues Arg-88 and 126-128 each bind phosphate; that span reads GTR.

Belongs to the RNase PH family. Homohexameric ring arranged as a trimer of dimers.

The enzyme catalyses tRNA(n+1) + phosphate = tRNA(n) + a ribonucleoside 5'-diphosphate. Its function is as follows. Phosphorolytic 3'-5' exoribonuclease that plays an important role in tRNA 3'-end maturation. Removes nucleotide residues following the 3'-CCA terminus of tRNAs; can also add nucleotides to the ends of RNA molecules by using nucleoside diphosphates as substrates, but this may not be physiologically important. Probably plays a role in initiation of 16S rRNA degradation (leading to ribosome degradation) during starvation. The protein is Ribonuclease PH of Mycobacterium avium (strain 104).